A 366-amino-acid polypeptide reads, in one-letter code: Cyanide hydratase (366 aa).

One can recognise a CN hydrolase domain in the interval 6 to 285 (YKAAAVTSEP…DGLMFVDIDL (280 aa)). Glu-46 functions as the Proton acceptor in the catalytic mechanism. Lys-128 is a catalytic residue. The Nucleophile role is filled by Cys-163.

This sequence belongs to the carbon-nitrogen hydrolase superfamily. Nitrilase family. As to quaternary structure, oligomer of dimers, forming left-handed helical fibers.

The catalysed reaction is formamide = hydrogen cyanide + H2O. Catalyzes the hydration of cyanide to formamide. Degradation of cyanide may be important for plant pathogenic fungi in infection of cyanogenic plants. Can also transform some nitriles like 2-cyanopyridine and fumaronitrile. This Pyrenophora teres f. teres (strain 0-1) (Barley net blotch fungus) protein is Cyanide hydratase.